Here is a 210-residue protein sequence, read N- to C-terminus: Putative biopolymer transport protein ExbB-like 3 (210 aa).

The next 3 helical transmembrane spans lie at 2–22 (AGGIVAVPLLGFSLLAVALII), 104–124 (LFQTIITVSPLLGLLGTILGL), and 152–172 (LVSTVMGLVVAIATLLFANVF).

Belongs to the ExbB/TolQ family.

It localises to the cell inner membrane. In terms of biological role, involved in the TonB-dependent energy-dependent transport of various receptor-bound substrates. Protects ExbD from proteolytic degradation and functionally stabilizes TonB. The protein is Putative biopolymer transport protein ExbB-like 3 of Synechocystis sp. (strain ATCC 27184 / PCC 6803 / Kazusa).